The primary structure comprises 660 residues: Chaperone protein DnaK (660 aa).

T201 is modified (phosphothreonine; by autocatalysis). The interval E599 to E660 is disordered. Residues A600–Q617 show a composition bias toward low complexity.

Belongs to the heat shock protein 70 family.

Functionally, acts as a chaperone. The protein is Chaperone protein DnaK of Chlamydia trachomatis serovar A (strain ATCC VR-571B / DSM 19440 / HAR-13).